Here is a 472-residue protein sequence, read N- to C-terminus: ATP synthase subunit beta (472 aa).

149-156 (GGAGVGKT) contacts ATP.

It belongs to the ATPase alpha/beta chains family. In terms of assembly, F-type ATPases have 2 components, CF(1) - the catalytic core - and CF(0) - the membrane proton channel. CF(1) has five subunits: alpha(3), beta(3), gamma(1), delta(1), epsilon(1). CF(0) has three main subunits: a(1), b(2) and c(9-12). The alpha and beta chains form an alternating ring which encloses part of the gamma chain. CF(1) is attached to CF(0) by a central stalk formed by the gamma and epsilon chains, while a peripheral stalk is formed by the delta and b chains.

Its subcellular location is the cell inner membrane. The enzyme catalyses ATP + H2O + 4 H(+)(in) = ADP + phosphate + 5 H(+)(out). Produces ATP from ADP in the presence of a proton gradient across the membrane. The catalytic sites are hosted primarily by the beta subunits. The polypeptide is ATP synthase subunit beta (Pelagibacter ubique (strain HTCC1062)).